The primary structure comprises 335 residues: Protein-glutamate methylesterase/protein-glutamine glutaminase 3 (335 aa).

Residues 2–119 (RIGIVNDMPL…GNPQTAAAPL (118 aa)) enclose the Response regulatory domain. Asp53 carries the post-translational modification 4-aspartylphosphate. Residues 144-335 (PKAGGARQRL…IAPRLAEVFD (192 aa)) enclose the CheB-type methylesterase domain. Catalysis depends on residues Ser159, His186, and Asp279.

The protein belongs to the CheB family. Phosphorylated by CheA. Phosphorylation of the N-terminal regulatory domain activates the methylesterase activity.

The protein resides in the cytoplasm. The catalysed reaction is [protein]-L-glutamate 5-O-methyl ester + H2O = L-glutamyl-[protein] + methanol + H(+). The enzyme catalyses L-glutaminyl-[protein] + H2O = L-glutamyl-[protein] + NH4(+). Involved in chemotaxis. Part of a chemotaxis signal transduction system that modulates chemotaxis in response to various stimuli. Catalyzes the demethylation of specific methylglutamate residues introduced into the chemoreceptors (methyl-accepting chemotaxis proteins or MCP) by CheR. Also mediates the irreversible deamidation of specific glutamine residues to glutamic acid. The protein is Protein-glutamate methylesterase/protein-glutamine glutaminase 3 of Pseudomonas aeruginosa (strain ATCC 15692 / DSM 22644 / CIP 104116 / JCM 14847 / LMG 12228 / 1C / PRS 101 / PAO1).